The sequence spans 896 residues: Translation initiation factor IF-2 (896 aa).

A compositionally biased stretch (basic and acidic residues) spans 117–174 (AEAEAKAKAEAEAKAKVDAEAKVKAKAEAEAKAKAKVQTEKPAAETAEDKAAKAEEAK). The segment at 117–303 (AEAEAKAKAE…TRSVAPESMD (187 aa)) is disordered. Residues 175–195 (LLAAQDAVAKAKANEEASAAA) show a composition bias toward low complexity. The segment covering 196–227 (DEARRLAEENEKRWAEEEKARKEAEKSVDHHV) has biased composition (basic and acidic residues). Residues 254 to 268 (PSANAGNNANANAGA) are compositionally biased toward low complexity. Residues 396–563 (PRAPVVTIMG…GILLEAEVLE (168 aa)) enclose the tr-type G domain. The interval 405 to 412 (GHVDHGKT) is G1. 405–412 (GHVDHGKT) serves as a coordination point for GTP. The G2 stretch occupies residues 430 to 434 (GITQH). Residues 451–454 (DTPG) form a G3 region. Residues 451–455 (DTPGH) and 505–508 (NKID) each bind GTP. The G4 stretch occupies residues 505 to 508 (NKID). The segment at 541–543 (SAK) is G5.

Belongs to the TRAFAC class translation factor GTPase superfamily. Classic translation factor GTPase family. IF-2 subfamily.

The protein resides in the cytoplasm. Its function is as follows. One of the essential components for the initiation of protein synthesis. Protects formylmethionyl-tRNA from spontaneous hydrolysis and promotes its binding to the 30S ribosomal subunits. Also involved in the hydrolysis of GTP during the formation of the 70S ribosomal complex. In Shewanella pealeana (strain ATCC 700345 / ANG-SQ1), this protein is Translation initiation factor IF-2.